Reading from the N-terminus, the 538-residue chain is Phosphoenolpyruvate carboxykinase (ATP) (538 aa).

Residues arginine 64, tyrosine 205, and lysine 211 each contribute to the substrate site. ATP contacts are provided by residues lysine 211, histidine 230, and glycine 246–threonine 254. Mn(2+)-binding residues include lysine 211 and histidine 230. Aspartate 267 lines the Mn(2+) pocket. ATP is bound by residues glutamate 295, arginine 331, arginine 447–isoleucine 448, and threonine 453. Arginine 331 is a substrate binding site.

Belongs to the phosphoenolpyruvate carboxykinase (ATP) family. As to quaternary structure, monomer. The cofactor is Mn(2+).

It is found in the cytoplasm. It carries out the reaction oxaloacetate + ATP = phosphoenolpyruvate + ADP + CO2. Its pathway is carbohydrate biosynthesis; gluconeogenesis. Functionally, involved in the gluconeogenesis. Catalyzes the conversion of oxaloacetate (OAA) to phosphoenolpyruvate (PEP) through direct phosphoryl transfer between the nucleoside triphosphate and OAA. The sequence is that of Phosphoenolpyruvate carboxykinase (ATP) from Mannheimia succiniciproducens (strain KCTC 0769BP / MBEL55E).